The chain runs to 1034 residues: Isoleucine--tRNA ligase (1034 aa).

The 'HIGH' region signature appears at P48–H58. A 'KMSKS' region motif is present at residues K588–H592. K591 is a binding site for ATP.

It belongs to the class-I aminoacyl-tRNA synthetase family. IleS type 2 subfamily. In terms of assembly, monomer. The cofactor is Zn(2+).

It is found in the cytoplasm. The catalysed reaction is tRNA(Ile) + L-isoleucine + ATP = L-isoleucyl-tRNA(Ile) + AMP + diphosphate. Catalyzes the attachment of isoleucine to tRNA(Ile). As IleRS can inadvertently accommodate and process structurally similar amino acids such as valine, to avoid such errors it has two additional distinct tRNA(Ile)-dependent editing activities. One activity is designated as 'pretransfer' editing and involves the hydrolysis of activated Val-AMP. The other activity is designated 'posttransfer' editing and involves deacylation of mischarged Val-tRNA(Ile). This chain is Isoleucine--tRNA ligase, found in Clostridium kluyveri (strain ATCC 8527 / DSM 555 / NBRC 12016 / NCIMB 10680 / K1).